Reading from the N-terminus, the 542-residue chain is Chaperonin GroEL (542 aa).

ATP contacts are provided by residues 29 to 32 (TLGP), 86 to 90 (DGTTT), G413, 477 to 479 (NAA), and D493.

The protein belongs to the chaperonin (HSP60) family. Forms a cylinder of 14 subunits composed of two heptameric rings stacked back-to-back. Interacts with the co-chaperonin GroES.

It is found in the cytoplasm. The enzyme catalyses ATP + H2O + a folded polypeptide = ADP + phosphate + an unfolded polypeptide.. Functionally, together with its co-chaperonin GroES, plays an essential role in assisting protein folding. The GroEL-GroES system forms a nano-cage that allows encapsulation of the non-native substrate proteins and provides a physical environment optimized to promote and accelerate protein folding. The sequence is that of Chaperonin GroEL from Beutenbergia cavernae (strain ATCC BAA-8 / DSM 12333 / CCUG 43141 / JCM 11478 / NBRC 16432 / NCIMB 13614 / HKI 0122).